We begin with the raw amino-acid sequence, 365 residues long: Putative F-box/kelch-repeat protein At4g39290 (365 aa).

Positions 10-58 (QMTFSMLPDDLVLNCLARVSKVYYPSLSFVSKKFRSLIASTELQELRSF) constitute an F-box domain. 2 Kelch repeats span residues 118–165 (DIYA…CVLN) and 167–213 (KIYV…KIVG).

This is Putative F-box/kelch-repeat protein At4g39290 from Arabidopsis thaliana (Mouse-ear cress).